A 196-amino-acid polypeptide reads, in one-letter code: tRNA(Phe) 7-((3-amino-3-carboxypropyl)-4-demethylwyosine(37)-N(4))-methyltransferase (196 aa).

This sequence belongs to the TYW3 family.

It catalyses the reaction 4-demethyl-7-[(3S)-3-amino-3-carboxypropyl]wyosine(37) in tRNA(Phe) + S-adenosyl-L-methionine = 7-[(3S)-3-amino-3-carboxypropyl]wyosine(37) in tRNA(Phe) + S-adenosyl-L-homocysteine + H(+). Functionally, S-adenosyl-L-methionine-dependent methyltransferase that acts as a component of the wyosine derivatives biosynthesis pathway. Probably methylates N-4 position of wybutosine-86 to produce wybutosine-72. The polypeptide is tRNA(Phe) 7-((3-amino-3-carboxypropyl)-4-demethylwyosine(37)-N(4))-methyltransferase (Archaeoglobus fulgidus (strain ATCC 49558 / DSM 4304 / JCM 9628 / NBRC 100126 / VC-16)).